We begin with the raw amino-acid sequence, 868 residues long: MDSYFSAKNSTLAGDMNATWPASHGFNATGDPPSMSITRLFPALLECFGIVLCGYIAGRANIITSTQAKGLGNFVSRFALPALLFKNMVVLNFSNVDWAFLYSVLIGKASVFFIVCVLTLLVASPESRFSKAGLFPIFATQSNDFALGYPIVEALYQSTYPEYLQYIYLVAPISLMMLNPIGFIFCEIQKSKDTQNASQNKAKIVGLGFLRVLQNPIVFMVFVGIAFNFILDKKIPVYMENFLDGLANSFSGSALFYLGLTMVGKIRRLKKSAFVVLTLLITAKLLVLPLLCREMVELLDKGDSVVNHTSLSNYAFLYGVFPVAPGVAIFATQFNMEVEIITSGMVISTFVSAPIMYVSAWLLTFPTMDAKPLAYAIQNVSFDISIISLVSLIWSLSILLLSKKYKQLPHMLTANLLIAQTIVCAGMMIWNFVKEKNFVGQILVFVLLYSSLYSTYLWTGLLAVSLFLLKKRESVQLPVGIIIISGWGIPALLVGVLLITGKHNGDSIDSAFFYGKEQMITTAVTLFCSILIAGVSLMCMNRTTQAGHYEGFGQSQNHKPVEPGSTAFEENPAPTNEPELFPSSIPETSCCSCSLGNGELRCPSIEPVTNSSASGPMPSSFEKTDHCVSRCDSQSCILAQEEEQYLQSGDPQLTRHVLLCLLLIIGLFANLSSCLWWLFNHETGRLYVELQFFCAVFNFGQGFISFGIFGLDKHLIILPFKRRLEFLWNNKEAAADRESPVSEEIKMTCQQFVHYHRDLCIRNIVRERRCGAKTSAGTFCGCDLVNWLIEVGLASDRGEAVIYGDRLVQGGVIQHITNEYEFRDEYLFYRFLQKSPEQSPPARTLRDHQEESYKEIGHSSPPSVSPKT.

Residues 1 to 36 (MDSYFSAKNSTLAGDMNATWPASHGFNATGDPPSMS) lie on the Lumenal side of the membrane. A PIN-like transporter region spans residues 1–368 (MDSYFSAKNS…SAWLLTFPTM (368 aa)). Asparagine 9, asparagine 17, and asparagine 27 each carry an N-linked (GlcNAc...) asparagine glycan. Residues 37–57 (ITRLFPALLECFGIVLCGYIA) traverse the membrane as a helical segment. Phenylalanine 41 and tyrosine 55 together coordinate cholesterol. Topologically, residues 58-77 (GRANIITSTQAKGLGNFVSR) are cytoplasmic. A helical transmembrane segment spans residues 78 to 98 (FALPALLFKNMVVLNFSNVDW). Over 99–102 (AFLY) the chain is Lumenal. Residues 103-123 (SVLIGKASVFFIVCVLTLLVA) traverse the membrane as a helical segment. Over 124 to 131 (SPESRFSK) the chain is Cytoplasmic. The chain crosses the membrane as a discontinuously helical span at residues 132 to 152 (AGLFPIFATQSNDFALGYPIV). Residues 153–165 (EALYQSTYPEYLQ) are Lumenal-facing. The chain crosses the membrane as a helical span at residues 166–186 (YIYLVAPISLMMLNPIGFIFC). Topologically, residues 187-211 (EIQKSKDTQNASQNKAKIVGLGFLR) are cytoplasmic. The discontinuously helical transmembrane segment at 212–232 (VLQNPIVFMVFVGIAFNFILD) threads the bilayer. Residues 233–241 (KKIPVYMEN) lie on the Lumenal side of the membrane. A discontinuously helical membrane pass occupies residues 242 to 262 (FLDGLANSFSGSALFYLGLTM). Residues 263–271 (VGKIRRLKK) lie on the Cytoplasmic side of the membrane. Residues glycine 264, lysine 265, and isoleucine 266 each coordinate cholesterol. Residues 272–292 (SAFVVLTLLITAKLLVLPLLC) traverse the membrane as a helical segment. The Lumenal segment spans residues 293–313 (REMVELLDKGDSVVNHTSLSN). The N-linked (GlcNAc...) asparagine glycan is linked to asparagine 307. Residues 314–334 (YAFLYGVFPVAPGVAIFATQF) form a discontinuously helical membrane-spanning segment. At 335 to 344 (NMEVEIITSG) the chain is on the cytoplasmic side. The helical transmembrane segment at 345-365 (MVISTFVSAPIMYVSAWLLTF) threads the bilayer. The Lumenal portion of the chain corresponds to 366–379 (PTMDAKPLAYAIQN). Residues 378–715 (QNVSFDISII…FGIFGLDKHL (338 aa)) form a GPCR region. The N-linked (GlcNAc...) asparagine glycan is linked to asparagine 379. The helical transmembrane segment at 380–400 (VSFDISIISLVSLIWSLSILL) threads the bilayer. Over 401 to 412 (LSKKYKQLPHML) the chain is Cytoplasmic. Residues 413-433 (TANLLIAQTIVCAGMMIWNFV) form a helical membrane-spanning segment. Topologically, residues 434–436 (KEK) are lumenal. Residues 437 to 457 (NFVGQILVFVLLYSSLYSTYL) traverse the membrane as a helical segment. At 458 to 478 (WTGLLAVSLFLLKKRESVQLP) the chain is on the cytoplasmic side. A helical transmembrane segment spans residues 479 to 499 (VGIIIISGWGIPALLVGVLLI). The Lumenal portion of the chain corresponds to 500–518 (TGKHNGDSIDSAFFYGKEQ). The chain crosses the membrane as a helical span at residues 519 to 539 (MITTAVTLFCSILIAGVSLMC). At 540–658 (MNRTTQAGHY…GDPQLTRHVL (119 aa)) the chain is on the cytoplasmic side. The segment at 550–582 (EGFGQSQNHKPVEPGSTAFEENPAPTNEPELFP) is disordered. Residue arginine 655 coordinates cholesterol. Residues 659 to 679 (LCLLLIIGLFANLSSCLWWLF) form a helical membrane-spanning segment. Topologically, residues 680-689 (NHETGRLYVE) are lumenal. Residues 690–710 (LQFFCAVFNFGQGFISFGIFG) traverse the membrane as a helical segment. Over 711-868 (LDKHLIILPF…SSPPSVSPKT (158 aa)) the chain is Cytoplasmic. The DEP domain maps to 755–833 (YHRDLCIRNI…DEYLFYRFLQ (79 aa)). Residues 836–868 (PEQSPPARTLRDHQEESYKEIGHSSPPSVSPKT) form a disordered region. Basic and acidic residues predominate over residues 844-857 (TLRDHQEESYKEIG).

Homodimer; via the transporter region and DEP domain. Interacts with the GATOR1 complex; preventing interaction between GATOR1 and KICSTOR; interaction is disrupted upon cholesterol starvation. Widely expressed in adult tissues and during development. In brain, widely distributed in forebrain regions, while it shows a more restricted distribution in the midbrain and hindbrain regions. Expressed at highest level in the lateral part of striatum and hippocampus.

The protein resides in the lysosome membrane. In terms of biological role, cholesterol-binding protein that acts as a regulator of mTORC1 signaling pathway. Acts as a sensor of cholesterol to signal cholesterol sufficiency to mTORC1: in presence of cholesterol, binds cholesterol, leading to disruption of the interaction between the GATOR1 and KICSTOR complexes and promotion of mTORC1 signaling. Upon cholesterol starvation, GPR155/LYCHOS is unable to perturb the association between GATOR1 and KICSTOR, leading to mTORC1 signaling inhibition. Binds indole-3-acetic acid and may play a role in tryptophan metabolism. This chain is Lysosomal cholesterol signaling protein, found in Mus musculus (Mouse).